The chain runs to 294 residues: MAMKRNPSRVFCAYSKNGTHRSAAPTTHRCIAGGGRGALDAGAENTQGHPESRCFPGGRPPQTGPSWCLGAAFRRAFLIDDAWRPLLEPELANPLTARLLAEYDRRCQTEEVLPPREDVFSWTRYCTPDDVRVVIIGQDPYHHPGQAHGLAFSVRADVPVPPSLRNVLAAVKNCYPDARMSGRGCLEKWARDGVLLLNTTLTVKRGAAASTSKLGWDRFVGGVVRRLAARRPGLVFMLWGAHAQNAIRPDPRQHYVLKFSHPSPLSKVPFGTCQHFLAANRYLETRDIMPITVV.

Residue D139 is the Proton acceptor of the active site.

This sequence belongs to the uracil-DNA glycosylase (UDG) superfamily. UNG family.

Its subcellular location is the host nucleus. The catalysed reaction is Hydrolyzes single-stranded DNA or mismatched double-stranded DNA and polynucleotides, releasing free uracil.. Its function is as follows. Excises uracil residues from the DNA which can arise as a result of misincorporation of dUMP residues by DNA polymerase or deamination of cytosines. Therefore may reduce deleterious uracil incorporation into the viral genome, particularly in terminally differentiated cells which lack DNA repair enzymes. The sequence is that of Uracil-DNA glycosylase (UL2) from Human herpesvirus 2 (strain 333) (HHV-2).